We begin with the raw amino-acid sequence, 230 residues long: Orotidine 5'-phosphate decarboxylase (230 aa).

Residues aspartate 10, lysine 32, 59-68, threonine 119, arginine 180, glutamine 189, glycine 209, and arginine 210 each bind substrate; that span reads DLKYHDIPNT. Lysine 61 acts as the Proton donor in catalysis.

The protein belongs to the OMP decarboxylase family. Type 1 subfamily. In terms of assembly, homodimer.

The enzyme catalyses orotidine 5'-phosphate + H(+) = UMP + CO2. The protein operates within pyrimidine metabolism; UMP biosynthesis via de novo pathway; UMP from orotate: step 2/2. Its function is as follows. Catalyzes the decarboxylation of orotidine 5'-monophosphate (OMP) to uridine 5'-monophosphate (UMP). The chain is Orotidine 5'-phosphate decarboxylase from Actinobacillus pleuropneumoniae serotype 5b (strain L20).